The sequence spans 259 residues: Translation initiation factor IF-2, chloroplastic (259 aa).

Positions 171–259 constitute a tr-type G domain; the sequence is LRAPIVAVLG…LLIIAADEGI (89 aa). 180–187 contacts GTP; it reads GHVNHGKT.

It belongs to the TRAFAC class translation factor GTPase superfamily. Classic translation factor GTPase family. IF-2 subfamily.

The protein localises to the plastid. The protein resides in the chloroplast. In terms of biological role, one of the essential components for the initiation of protein synthesis. Protects formylmethionyl-tRNA from spontaneous hydrolysis and promotes its binding to the 30S ribosomal subunits. Also involved in the hydrolysis of GTP during the formation of the 70S ribosomal complex. The sequence is that of Translation initiation factor IF-2, chloroplastic (infB) from Galdieria sulphuraria (Red alga).